A 215-amino-acid chain; its full sequence is MSKVYNWFNERLEIQSIADDVTSKYVPPHVNIFYCLGGITLTCFLVQVATGFAMTFYYRPTVTEAFASVQYIMTEVNFGWLIRSVHRWSASMMVLMMILHVFRVYLTGGFKKPRELTWVTGVILSVITVSFGVTGYSLPWDQVGYWAVKIVTGVPDAIPVIGGFVVELLRGSVGVGQPTLTRFYSLHTFVLPLLAAVFMLMHFLMIRKQGISGPL.

A helical membrane pass occupies residues 32 to 52; that stretch reads IFYCLGGITLTCFLVQVATGF. C35 is a heme c binding site. Heme b is bound by residues H86 and H100. The next 3 helical transmembrane spans lie at 90-110, 116-136, and 186-206; these read ASMM…TGGF, LTWV…VTGY, and LHTF…FLMI. Heme b contacts are provided by H187 and H202.

Belongs to the cytochrome b family. PetB subfamily. The 4 large subunits of the cytochrome b6-f complex are cytochrome b6, subunit IV (17 kDa polypeptide, PetD), cytochrome f and the Rieske protein, while the 4 small subunits are PetG, PetL, PetM and PetN. The complex functions as a dimer. It depends on heme b as a cofactor. Heme c serves as cofactor.

It localises to the plastid. It is found in the chloroplast thylakoid membrane. Functionally, component of the cytochrome b6-f complex, which mediates electron transfer between photosystem II (PSII) and photosystem I (PSI), cyclic electron flow around PSI, and state transitions. In Ostreococcus tauri, this protein is Cytochrome b6.